Consider the following 412-residue polypeptide: Multidrug resistance protein MdtG (412 aa).

10 helical membrane passes run 20-40, 62-82, 96-116, 119-139, 150-170, 177-197, 225-245, 260-280, 294-314, and 382-402; these read LFVA…IMPF, LVFS…GGLA, LGMS…QFLI, ALLG…ATQI, TLST…GLLA, PVFF…LYFI, VLCL…IAPI, LAFI…MSAP, ILVA…LVQT, and TVFF…YWCL.

The protein belongs to the major facilitator superfamily. DHA1 family. MdtG (TC 2.A.1.2.20) subfamily.

The protein resides in the cell inner membrane. This Rahnella sp. (strain Y9602) protein is Multidrug resistance protein MdtG.